The sequence spans 75 residues: CLAVATA3/ESR (CLE)-related protein 2 (75 aa).

An N-terminal signal peptide occupies residues 1–22 (MAKLSFTFCFLLFLLLSSIAAG). A disordered region spans residues 40-75 (PSIEATSPTVEDDQAAGSHGKSPERLSPGGPDPQHH). A hydroxyproline mark is found at P67 and P70. O-linked (Ara...) hydroxyproline glycosylation is present at P70.

The protein belongs to the CLV3/ESR signal peptide family. As to quaternary structure, interacts with the extracellular leucine-rich repeat region of CLV1. Post-translationally, the O-glycosylation (arabinosylation) of the hydroxyproline Pro-70 enhances binding affinity of the CLE2p peptide for its receptor. As to expression, mostly expressed in roots and seedlings, and, to a lower extent, in apex.

It is found in the secreted. Its subcellular location is the extracellular space. In terms of biological role, extracellular signal peptide that regulates cell fate. May act with CLV1 as a ligand-receptor pair in a signal transduction pathway, coordinating growth between adjacent meristematic regions. The polypeptide is CLAVATA3/ESR (CLE)-related protein 2 (Arabidopsis thaliana (Mouse-ear cress)).